Reading from the N-terminus, the 164-residue chain is FMN reductase (NADH) RutF (164 aa).

Belongs to the non-flavoprotein flavin reductase family. RutF subfamily.

The enzyme catalyses FMNH2 + NAD(+) = FMN + NADH + 2 H(+). In terms of biological role, catalyzes the reduction of FMN to FMNH2 which is used to reduce pyrimidine by RutA via the Rut pathway. The protein is FMN reductase (NADH) RutF of Escherichia coli O150:H5 (strain SE15).